A 307-amino-acid chain; its full sequence is Acetyl-coenzyme A carboxylase carboxyl transferase subunit beta (307 aa).

One can recognise a CoA carboxyltransferase N-terminal domain in the interval 25 to 294 (LWIKDPESGE…TEENGSRRLP (270 aa)).

This sequence belongs to the AccD/PCCB family. In terms of assembly, acetyl-CoA carboxylase is a heterohexamer composed of biotin carboxyl carrier protein (AccB), biotin carboxylase (AccC) and two subunits each of ACCase subunit alpha (AccA) and ACCase subunit beta (AccD).

It localises to the cytoplasm. The catalysed reaction is N(6)-carboxybiotinyl-L-lysyl-[protein] + acetyl-CoA = N(6)-biotinyl-L-lysyl-[protein] + malonyl-CoA. Its pathway is lipid metabolism; malonyl-CoA biosynthesis; malonyl-CoA from acetyl-CoA: step 1/1. In terms of biological role, component of the acetyl coenzyme A carboxylase (ACC) complex. Biotin carboxylase (BC) catalyzes the carboxylation of biotin on its carrier protein (BCCP) and then the CO(2) group is transferred by the transcarboxylase to acetyl-CoA to form malonyl-CoA. This Chelativorans sp. (strain BNC1) protein is Acetyl-coenzyme A carboxylase carboxyl transferase subunit beta.